Here is a 461-residue protein sequence, read N- to C-terminus: MEYSRKTYLDLNIMAKYILILSLFFGPGLSWDVFYSGDEDQLSLARERRAANYNPSPHMSTWERNEIQQEILNILGLQHRPRPPSLRGGQNQFCAQFTEWSYYRTLNIDEQSGHPSETEPQPGGLASNAIYNSPDSSGIGSVMSGTVFNYTRNEVQAVSQADTIMSLPVHYKDAAIEDTEHRYRFDIGRIPQGETVTSAELRVFRDAGRQGRSLYRIDVLLLRERGSDGSRSPVYLDSTIVGAGDHGWLVFDMTSATSTWRSYPGANVGLQLRVESLQGLNIDPTDAGVVGVGNNEGREPFMVVFFQRNEEVIATNSHLRRNRRAATRQKKGGKRPRKPDTDNDIASRDSASSLNSDWQCKRKNLFVNFEDLDWQEWIIAPLGYVAFYCQGECAFPLNGHANATNHAIVQTLVHHMSPSHVPQPCCAPTKLSPITVLYYDDSRNVVLKKYKNMVVRACGCL.

The first 30 residues, 1-30 (MEYSRKTYLDLNIMAKYILILSLFFGPGLS), serve as a signal peptide directing secretion. Residues 31 to 338 (WDVFYSGDED…QKKGGKRPRK (308 aa)) constitute a propeptide that is removed on maturation. N149 carries an N-linked (GlcNAc...) asparagine glycan. A disordered region spans residues 317-351 (SHLRRNRRAATRQKKGGKRPRKPDTDNDIASRDSA). Residues 318-337 (HLRRNRRAATRQKKGGKRPR) are compositionally biased toward basic residues. Residues 338–347 (KPDTDNDIAS) show a composition bias toward basic and acidic residues. Cystine bridges form between C360–C426, C389–C458, and C393–C460. An N-linked (GlcNAc...) asparagine glycan is attached at N402.

The protein belongs to the TGF-beta family. Homodimer; disulfide-linked.

It is found in the secreted. The sequence is that of Protein DVR-1 homolog (DVR1) from Strongylocentrotus purpuratus (Purple sea urchin).